We begin with the raw amino-acid sequence, 138 residues long: Small ribosomal subunit protein uS11c (138 aa).

Positions 1–24 (MTKPIPRIGSRKNGRISSRKNGRR) are disordered. The span at 9–24 (GSRKNGRISSRKNGRR) shows a compositional bias: basic residues.

Belongs to the universal ribosomal protein uS11 family. As to quaternary structure, part of the 30S ribosomal subunit.

It localises to the plastid. It is found in the chloroplast. This Chloranthus spicatus (Chulantree) protein is Small ribosomal subunit protein uS11c.